Here is a 227-residue protein sequence, read N- to C-terminus: Enolase-phosphatase E1 (227 aa).

The protein belongs to the HAD-like hydrolase superfamily. MasA/MtnC family. Monomer. Requires Mg(2+) as cofactor.

The enzyme catalyses 5-methylsulfanyl-2,3-dioxopentyl phosphate + H2O = 1,2-dihydroxy-5-(methylsulfanyl)pent-1-en-3-one + phosphate. It participates in amino-acid biosynthesis; L-methionine biosynthesis via salvage pathway; L-methionine from S-methyl-5-thio-alpha-D-ribose 1-phosphate: step 3/6. Its pathway is amino-acid biosynthesis; L-methionine biosynthesis via salvage pathway; L-methionine from S-methyl-5-thio-alpha-D-ribose 1-phosphate: step 4/6. Its function is as follows. Bifunctional enzyme that catalyzes the enolization of 2,3-diketo-5-methylthiopentyl-1-phosphate (DK-MTP-1-P) into the intermediate 2-hydroxy-3-keto-5-methylthiopentenyl-1-phosphate (HK-MTPenyl-1-P), which is then dephosphorylated to form the acireductone 1,2-dihydroxy-3-keto-5-methylthiopentene (DHK-MTPene). The protein is Enolase-phosphatase E1 of Pseudomonas syringae pv. syringae (strain B728a).